Here is a 113-residue protein sequence, read N- to C-terminus: UPF0212 protein AF_0282 (113 aa).

This sequence belongs to the UPF0212 family.

This chain is UPF0212 protein AF_0282, found in Archaeoglobus fulgidus (strain ATCC 49558 / DSM 4304 / JCM 9628 / NBRC 100126 / VC-16).